The sequence spans 110 residues: Cation efflux system protein CusF (110 aa).

The N-terminal stretch at 1–21 is a signal peptide; sequence MKKALQVAMFSLFTVIGFNAQ.

As to quaternary structure, the cus efflux system is composed of CusA, CusB, CusC and CusF. Interacts with copper-exporting P-type ATPase CopA; when this protein is precharged with copper it binds very little CopA.

It localises to the periplasm. Its function is as follows. Part of a cation efflux system that mediates resistance to copper and silver. Binds one copper per polypeptide. This chain is Cation efflux system protein CusF (cusF), found in Escherichia coli (strain K12).